The following is a 456-amino-acid chain: 3-isopropylmalate dehydratase large subunit (456 aa).

The [4Fe-4S] cluster site is built by Cys336, Cys396, and Cys399.

It belongs to the aconitase/IPM isomerase family. LeuC type 1 subfamily. In terms of assembly, heterodimer of LeuC and LeuD. The cofactor is [4Fe-4S] cluster.

It carries out the reaction (2R,3S)-3-isopropylmalate = (2S)-2-isopropylmalate. Its pathway is amino-acid biosynthesis; L-leucine biosynthesis; L-leucine from 3-methyl-2-oxobutanoate: step 2/4. Functionally, catalyzes the isomerization between 2-isopropylmalate and 3-isopropylmalate, via the formation of 2-isopropylmaleate. In Staphylococcus aureus (strain MW2), this protein is 3-isopropylmalate dehydratase large subunit.